The primary structure comprises 247 residues: Particulate methane monooxygenase beta subunit (247 aa).

The next 6 helical transmembrane spans lie at 23–43, 59–79, 86–106, 111–131, 145–165, and 215–235; these read WMAL…HAML, LWVT…QSYL, PWGA…NRYF, WTYF…AIIL, AIVG…PIIA, and VSAF…HFIG.

M.capsulatus has two forms of methane monooxygenase, a soluble (sMMO) and a membrane-bound (particulate) type (pMMO). The particulate type is a nonamer composed of three alpha:beta:gamma heterotrimeric protomers assembled into a cylindrical structure; the beta and gamma subunits comprise the bulk of the membrane-spanning regions and the soluble regions are derived primarily from alpha subunits which form two antiparallel beta-barrel-like structures each. This assembly, also called pMMO hydroxylase (pMMO-H), is proposed to associate with methanol dehydrogenase (MDH), also designated as pMMO-R, to form the pMMO-C complex which seems to have greater methane monooxygenase activity.

It is found in the membrane. The catalysed reaction is methane + a quinol + O2 = methanol + a quinone + H2O. In terms of biological role, non-catalytic subunit of the methane monooxygenase that is responsible for the initial oxygenation of methane to methanol in methanotrophs. At least in vitro, specific quinols can replace NADH as reductants. This is Particulate methane monooxygenase beta subunit (pmoA1) from Methylococcus capsulatus (strain ATCC 33009 / NCIMB 11132 / Bath).